The primary structure comprises 107 residues: Phosphoribosyl-ATP pyrophosphatase (107 aa).

Belongs to the PRA-PH family.

It is found in the cytoplasm. It catalyses the reaction 1-(5-phospho-beta-D-ribosyl)-ATP + H2O = 1-(5-phospho-beta-D-ribosyl)-5'-AMP + diphosphate + H(+). Its pathway is amino-acid biosynthesis; L-histidine biosynthesis; L-histidine from 5-phospho-alpha-D-ribose 1-diphosphate: step 2/9. In Novosphingobium aromaticivorans (strain ATCC 700278 / DSM 12444 / CCUG 56034 / CIP 105152 / NBRC 16084 / F199), this protein is Phosphoribosyl-ATP pyrophosphatase.